The chain runs to 332 residues: Probable cation efflux system protein MT2084 (332 aa).

The next 5 helical transmembrane spans lie at 46–66 (ISLLVLGLTALIQIVIVVMSG), 75–95 (IHNFADALTAVPLWIAFALGA), 113–133 (AGSFVVAMITMSAIIAGYEAI), 145–165 (VGWVALAGLVGFIGNEWVALY), and 202–222 (VALGFPLADPIVGLLITAAIL).

Belongs to the cation diffusion facilitator (CDF) transporter (TC 2.A.4) family.

The protein localises to the cell membrane. This is Probable cation efflux system protein MT2084 from Mycobacterium tuberculosis (strain CDC 1551 / Oshkosh).